A 151-amino-acid polypeptide reads, in one-letter code: Large ribosomal subunit protein bL9 (151 aa).

Belongs to the bacterial ribosomal protein bL9 family.

Binds to the 23S rRNA. The sequence is that of Large ribosomal subunit protein bL9 from Thermosipho melanesiensis (strain DSM 12029 / CIP 104789 / BI429).